Here is a 148-residue protein sequence, read N- to C-terminus: Protein ORM1 (148 aa).

4 helical membrane-spanning segments follow: residues 12–32 (WIIH…FPGV), 36–56 (WSWT…FHLI), 89–109 (FLII…HYDL), and 111–131 (MFSW…LPVT).

The protein to yeast YLR350W C-terminus.

The protein resides in the membrane. The sequence is that of Protein ORM1 (ORM1) from Saccharomyces pastorianus (strain ATCC 76670 / Carlsberg bottom yeast no.2 / CBS 1503 / CLIB 180 / NBRC 10610 / NRRL Y-1525) (Saaz-type lager yeast).